The primary structure comprises 387 residues: Patatin group A-2 (387 aa).

Residues 1-23 form the signal peptide; sequence MATTKSFLILIVMILATTSSTFA. The 199-residue stretch at 32–230 folds into the PNPLA domain; it reads LSIDGGGIKG…TVADPALLSV (199 aa). Residues 36 to 41 carry the GXGXXG motif; sequence GGGIKG. A GXSXG motif is present at residues 75 to 79; sequence GTSTG. The active-site Nucleophile is Ser77. N-linked (GlcNAc...) asparagine glycosylation occurs at Asn115. The active-site Proton acceptor is Asp216. The DGA/G signature appears at 216–218; the sequence is DGA. The stretch at 361–385 forms a coiled coil; it reads ETYEEALKRFAKLLSDRKKLRANKA.

It belongs to the patatin family. Tuber and stolon.

It localises to the vacuole. Probable lipolytic acyl hydrolase (LAH), an activity which is thought to be involved in the response of tubers to pathogens. This is Patatin group A-2 from Solanum tuberosum (Potato).